The chain runs to 413 residues: MRVIIVIMMVVFVVVGTSSGQEIILTSEKLINSAYQLQEIHEKVGIQSDIVTVEQIWDSYSPVEDPLVSGYSTEQVYDSYNYTLALKIISFLRTVNASYVTILGDADIVPPSYYAKLIFYEPFPTDFFYASPDYDLKPDFAVGRIPAGSEDEAEKVLGKINDWLSDIGSGNYVNAALIGMRIYAAPYSIERETIDDYEVWQGETAVKLLEDLGFTETFNTTIALQSDEEWTSVKQTFDEALSGGYGVVFHVGHGIPYALDSDDGGMYTTRYMNMLDKRRPLLPVVLSSGCSAAAFDEEIRDIYLPNWAPGLWSEFLLTNDAGGIAFVGFTGTTGSDYQFSESDGFVEVAGVKHADNILIKTLKNLPGNRLGDAFKAALEEVKSEENIKLNPSTEVEEWKLRVYLEAETKFLET.

The first 20 residues, 1–20 (MRVIIVIMMVVFVVVGTSSG), serve as a signal peptide directing secretion.

This is an uncharacterized protein from Archaeoglobus fulgidus (strain ATCC 49558 / DSM 4304 / JCM 9628 / NBRC 100126 / VC-16).